Reading from the N-terminus, the 561-residue chain is Putative cuticle collagen 145 (561 aa).

An N-terminal signal peptide occupies residues 1–30 (MEKILVTLSTGAASIAVLAVLFTIPSLYNT). The span at 100–112 (TCPPGPPGPPGQP) shows a compositional bias: pro residues. 4 disordered regions span residues 100–134 (TCPP…TYAP), 148–271 (PQGP…PGGP), 367–398 (TCPP…NTAT), and 422–540 (TGPA…GPGL). Triple-helical region stretches follow at residues 102 to 127 (PPGP…KGED) and 153 to 276 (GPEG…LPGN). 2 stretches are compositionally biased toward low complexity: residues 164 to 209 (AGPD…PGQD) and 219 to 265 (APGA…DGQP). The span at 367-379 (TCPPGPPGPPGQP) shows a compositional bias: pro residues. A triple-helical region region spans residues 413–544 (KCPQGPAGPT…PGGPGLPGND (132 aa)). Composition is skewed to low complexity over residues 422-467 (TGPA…PGQD) and 486-532 (APGA…DGQP). The region spanning 485–543 (GAPGAPGNAGPAGPAGQDGFPGQDGQPGPAGPAGQDGFPGNAGSDGQPGAPGGPGLPGN) is the Collagen-like domain.

It belongs to the cuticular collagen family. In terms of assembly, collagen polypeptide chains are complexed within the cuticle by disulfide bonds and other types of covalent cross-links.

Nematode cuticles are composed largely of collagen-like proteins. The cuticle functions both as an exoskeleton and as a barrier to protect the worm from its environment. The sequence is that of Putative cuticle collagen 145 from Caenorhabditis briggsae.